Here is a 496-residue protein sequence, read N- to C-terminus: NADP-dependent glyceraldehyde-3-phosphate dehydrogenase (496 aa).

Substrate contacts are provided by residues Arg116 and 169–170; that span reads NY. NADP(+) is bound by residues Lys192, Thr195, and Asp230. Residue 245–249 coordinates NAD(+); the sequence is GGDTG. Glu264 (proton acceptor) is an active-site residue. 297–299 contacts substrate; that stretch reads RCT. Cys298 serves as the catalytic Nucleophile. Residue Glu391 participates in NADP(+) binding. Arg451 is a substrate binding site.

It belongs to the aldehyde dehydrogenase family.

The protein resides in the cytoplasm. The catalysed reaction is D-glyceraldehyde 3-phosphate + NADP(+) + H2O = (2R)-3-phosphoglycerate + NADPH + 2 H(+). Important as a means of generating NADPH for biosynthetic reactions. This is NADP-dependent glyceraldehyde-3-phosphate dehydrogenase (GAPN) from Nicotiana plumbaginifolia (Leadwort-leaved tobacco).